We begin with the raw amino-acid sequence, 735 residues long: Phosphoribosylformylglycinamidine synthase subunit PurL (735 aa).

The active site involves H50. ATP contacts are provided by Y53 and K92. E94 provides a ligand contact to Mg(2+). Substrate-binding positions include 95-98 and R117; that span reads SHNH. H96 functions as the Proton acceptor in the catalytic mechanism. Position 118 (D118) interacts with Mg(2+). Residue Q241 participates in substrate binding. D269 lines the Mg(2+) pocket. 313–315 is a substrate binding site; the sequence is ESQ. Residues D495 and G532 each contribute to the ATP site. Position 533 (N533) interacts with Mg(2+). A substrate-binding site is contributed by S535.

It belongs to the FGAMS family. Monomer. Part of the FGAM synthase complex composed of 1 PurL, 1 PurQ and 2 PurS subunits.

Its subcellular location is the cytoplasm. It carries out the reaction N(2)-formyl-N(1)-(5-phospho-beta-D-ribosyl)glycinamide + L-glutamine + ATP + H2O = 2-formamido-N(1)-(5-O-phospho-beta-D-ribosyl)acetamidine + L-glutamate + ADP + phosphate + H(+). It participates in purine metabolism; IMP biosynthesis via de novo pathway; 5-amino-1-(5-phospho-D-ribosyl)imidazole from N(2)-formyl-N(1)-(5-phospho-D-ribosyl)glycinamide: step 1/2. Functionally, part of the phosphoribosylformylglycinamidine synthase complex involved in the purines biosynthetic pathway. Catalyzes the ATP-dependent conversion of formylglycinamide ribonucleotide (FGAR) and glutamine to yield formylglycinamidine ribonucleotide (FGAM) and glutamate. The FGAM synthase complex is composed of three subunits. PurQ produces an ammonia molecule by converting glutamine to glutamate. PurL transfers the ammonia molecule to FGAR to form FGAM in an ATP-dependent manner. PurS interacts with PurQ and PurL and is thought to assist in the transfer of the ammonia molecule from PurQ to PurL. This is Phosphoribosylformylglycinamidine synthase subunit PurL from Bartonella henselae (strain ATCC 49882 / DSM 28221 / CCUG 30454 / Houston 1) (Rochalimaea henselae).